The chain runs to 380 residues: MTTPIRFELIKTCRQTGARLGILHTPHGSFETPMFMPVGTLATVKTLSPEELKEMGAGVILSNTYHLWLRPGHDIVEEAGGLHAFMNWDRGILTDSGGFQVFSLSEFRRIEEEGVYFRNHLNGDKLFLSPEKAVEIQNALGADIIMAFDECPPYPATYEYMKQSIERTSRWAERCLKAHRRPNEQGLFGIVQGGEYEELRRQSARDLVSLDFPGYAVGGLSVGEPKEVMNRVLEFTTPLLPADKPRYLMGVGSPDSLIDGAIRGIDMFDCVLPTRIGRNGTVMTSEGRVVIKNAQYARDFSPLDPNCDCYTCRNYTRAYIRHLIKCDETFGIRLTSYHNVYFLIKLMEQVRQAIREDRLADFREEFFECYGFNKPNAKNF.

The Proton acceptor role is filled by aspartate 95. Residues 95–99 (DSGGF), aspartate 149, glutamine 192, and glycine 219 each bind substrate. The interval 250–256 (GVGSPDS) is RNA binding. Aspartate 269 functions as the Nucleophile in the catalytic mechanism. Residues 274-278 (TRIGR) form an RNA binding; important for wobble base 34 recognition region. Zn(2+)-binding residues include cysteine 307, cysteine 309, cysteine 312, and histidine 338.

Belongs to the queuine tRNA-ribosyltransferase family. Homodimer. Within each dimer, one monomer is responsible for RNA recognition and catalysis, while the other monomer binds to the replacement base PreQ1. The cofactor is Zn(2+).

It carries out the reaction 7-aminomethyl-7-carbaguanine + guanosine(34) in tRNA = 7-aminomethyl-7-carbaguanosine(34) in tRNA + guanine. It functions in the pathway tRNA modification; tRNA-queuosine biosynthesis. Functionally, catalyzes the base-exchange of a guanine (G) residue with the queuine precursor 7-aminomethyl-7-deazaguanine (PreQ1) at position 34 (anticodon wobble position) in tRNAs with GU(N) anticodons (tRNA-Asp, -Asn, -His and -Tyr). Catalysis occurs through a double-displacement mechanism. The nucleophile active site attacks the C1' of nucleotide 34 to detach the guanine base from the RNA, forming a covalent enzyme-RNA intermediate. The proton acceptor active site deprotonates the incoming PreQ1, allowing a nucleophilic attack on the C1' of the ribose to form the product. After dissociation, two additional enzymatic reactions on the tRNA convert PreQ1 to queuine (Q), resulting in the hypermodified nucleoside queuosine (7-(((4,5-cis-dihydroxy-2-cyclopenten-1-yl)amino)methyl)-7-deazaguanosine). The chain is Queuine tRNA-ribosyltransferase from Geobacillus kaustophilus (strain HTA426).